We begin with the raw amino-acid sequence, 616 residues long: Electron transfer flavoprotein-ubiquinone oxidoreductase, mitochondrial (616 aa).

The N-terminal 32 residues, 1 to 32, are a transit peptide targeting the mitochondrion; that stretch reads MLVRLTKLSCPAYHWFHALKIKKCLPLCAPRC. 70–84 is a binding site for FAD; that stretch reads VVIVGAGPAGLSAAI. An N6-acetyllysine modification is found at Lys-95. An intramembrane segment occupies 108 to 129; the sequence is IGAHTLSGACLDPAAFKELFPD. Residues Lys-131 and Lys-222 each carry the N6-acetyllysine modification. The a ubiquinone site is built by Gly-304 and Gly-305. Lys-356 and Lys-415 each carry N6-acetyllysine. The stretch at 427–446 is an intramembrane region; it reads TGLHVTEYEDNLKQSWVWKE. Ser-550 is subject to Phosphoserine. Cys-560, Cys-585, Cys-588, and Cys-591 together coordinate [4Fe-4S] cluster. The 4Fe-4S ferredoxin-type domain occupies 576 to 605; it reads FRLQINAQNCVHCKTCDIKDPSQNINWVVP.

Belongs to the ETF-QO/FixC family. In terms of assembly, monomer. Requires [4Fe-4S] cluster as cofactor. The cofactor is FAD. In terms of processing, acetylation of Lys-95 and Lys-222 is observed in liver mitochondria from fasted mice but not from fed mice.

It localises to the mitochondrion inner membrane. The catalysed reaction is a ubiquinone + reduced [electron-transfer flavoprotein] = a ubiquinol + oxidized [electron-transfer flavoprotein] + H(+). Its function is as follows. Accepts electrons from ETF and reduces ubiquinone. This Mus musculus (Mouse) protein is Electron transfer flavoprotein-ubiquinone oxidoreductase, mitochondrial (Etfdh).